Consider the following 131-residue polypeptide: Large ribosomal subunit protein bL12 (131 aa).

Belongs to the bacterial ribosomal protein bL12 family. As to quaternary structure, homodimer. Part of the ribosomal stalk of the 50S ribosomal subunit. Forms a multimeric L10(L12)X complex, where L10 forms an elongated spine to which 2 to 4 L12 dimers bind in a sequential fashion. Binds GTP-bound translation factors.

Its function is as follows. Forms part of the ribosomal stalk which helps the ribosome interact with GTP-bound translation factors. Is thus essential for accurate translation. This is Large ribosomal subunit protein bL12 from Prochlorococcus marinus (strain MIT 9515).